A 367-amino-acid polypeptide reads, in one-letter code: CCN family member 4 (367 aa).

An N-terminal signal peptide occupies residues 1–22; the sequence is MRWLLPWTLAAVAVLRVGNILA. The IGFBP N-terminal domain maps to 45–118; that stretch reads RPEFCKWPCE…RYAIGVCAQV (74 aa). 4 disulfide bridges follow: Cys-49-Cys-73, Cys-53-Cys-75, Cys-55-Cys-76, and Cys-62-Cys-79. A glycan (N-linked (GlcNAc...) asparagine) is linked at Asn-86. Cystine bridges form between Cys-87/Cys-101 and Cys-93/Cys-115. The VWFC domain maps to 121 to 186; it reads VGCVLDGVRY…GQCCEQWVCD (66 aa). N-linked (GlcNAc...) asparagine glycosylation occurs at Asn-143. The region spanning 215 to 260 is the TSP type-1 domain; it reads NCIAYTSPWSPCSTTCGLGISTRISNVNARCWPEQESRLCNLRPCD. Cystine bridges form between Cys-273–Cys-310, Cys-290–Cys-324, Cys-301–Cys-340, Cys-304–Cys-342, and Cys-309–Cys-346. The 75-residue stretch at 273–347 folds into the CTCK domain; the sequence is CLAVYQPEEA…NACFCNLSCR (75 aa). Residue Asn-284 is glycosylated (N-linked (GlcNAc...) asparagine). A glycan (N-linked (GlcNAc...) asparagine) is linked at Asn-343.

The protein belongs to the CCN family. As to expression, highly expressed in kidney and lung. Lower levels in heart, brain, spleen, liver, skeletal muscle and testis. Expressed in low metastatic melanoma cells.

It is found in the secreted. Its function is as follows. Downstream regulator in the Wnt/Frizzled-signaling pathway. Associated with cell survival. Adheres to skin and melanoma fibroblasts. In vitro binding to skin fibroblasts occurs through the proteoglycans, decorin and biglycan. Suppresses tumor growth in vivo. The protein is CCN family member 4 (Ccn4) of Mus musculus (Mouse).